Consider the following 119-residue polypeptide: UPF0102 protein FN1370 (119 aa).

This sequence belongs to the UPF0102 family.

This Fusobacterium nucleatum subsp. nucleatum (strain ATCC 25586 / DSM 15643 / BCRC 10681 / CIP 101130 / JCM 8532 / KCTC 2640 / LMG 13131 / VPI 4355) protein is UPF0102 protein FN1370.